The sequence spans 907 residues: Catenin alpha-1 (907 aa).

Over residues 870–879 (VKREKLDDGQ) the composition is skewed to basic and acidic residues. The interval 870–895 (VKREKLDDGQTNKVKRSSQKKHINPV) is disordered. A compositionally biased stretch (basic residues) spans 882–892 (KVKRSSQKKHI).

The protein belongs to the vinculin/alpha-catenin family. As to quaternary structure, interacts with ctnnb1, jupa and cdh2. Interacts with cdh1 during early stages of oogenesis, interaction is no longer present when oocyte develops into the unfertilized egg. As to expression, expressed in the skin (at protein level). Expressed in the ovary.

It is found in the cell junction. The protein localises to the adherens junction. It localises to the cytoplasm. Its subcellular location is the cytoskeleton. The protein resides in the cell membrane. It is found in the nucleus. Functionally, associates with the cytoplasmic domain of a variety of cadherins, forming catenin and cadherin complexes which are further linked to the actin filament network and is thereby involved in cell-cell adhesion. Required for embryonic development, via maintenance of adherens junctions that facilitate the maintenance of the epithelial barrier. The sequence is that of Catenin alpha-1 from Danio rerio (Zebrafish).